A 264-amino-acid chain; its full sequence is COP9 signalosome complex subunit 7b (264 aa).

Residue Ala-2 is modified to N-acetylalanine. The PCI domain occupies 2 to 159 (AGEQKPSSNL…QLLEVDFCIG (158 aa)). The stretch at 194 to 237 (RANQYKENHHRTQQQVEAEVSNIKKTLKATASSSAQEMEQQLAE) forms a coiled coil. Positions 223–232 (TASSSAQEME) are enriched in polar residues. The tract at residues 223 to 264 (TASSSAQEMEQQLAERECPPHTEQRQPTKKMSKVKGLVSSRH) is disordered. Basic and acidic residues predominate over residues 235-248 (LAERECPPHTEQRQ).

The protein belongs to the CSN7/EIF3M family. CSN7 subfamily. As to quaternary structure, component of the CSN complex, composed of COPS1/GPS1, COPS2, COPS3, COPS4, COPS5, COPS6, COPS7 (COPS7A or COPS7B) and COPS8 and COPS9. In the complex, it probably interacts directly with COPS1, COPS2, COPS4, COPS5, COPS6 and COPS8. Interacts with EIF3S6.

Its subcellular location is the cytoplasm. The protein localises to the nucleus. Its function is as follows. Component of the COP9 signalosome complex (CSN), a complex involved in various cellular and developmental processes. The CSN complex is an essential regulator of the ubiquitin (Ubl) conjugation pathway by mediating the deneddylation of the cullin subunits of SCF-type E3 ligase complexes, leading to decrease the Ubl ligase activity of SCF-type complexes such as SCF, CSA or DDB2. The complex is also involved in phosphorylation of p53/TP53, JUN, I-kappa-B-alpha/NFKBIA, ITPK1 and IRF8/ICSBP, possibly via its association with CK2 and PKD kinases. CSN-dependent phosphorylation of TP53 and JUN promotes and protects degradation by the Ubl system, respectively. The sequence is that of COP9 signalosome complex subunit 7b (Cops7b) from Mus musculus (Mouse).